A 381-amino-acid polypeptide reads, in one-letter code: Creatine kinase M-type (381 aa).

One can recognise a Phosphagen kinase N-terminal domain in the interval 11–98 (KLNYSAAEEF…FDPVIEDRHG (88 aa)). In terms of domain architecture, Phosphagen kinase C-terminal spans 125 to 367 (YVLSSRVRTG…KLMVEMEKRL (243 aa)). ATP is bound by residues 128–132 (SSRVR), H191, R236, R292, 320–325 (RGTGGV), and D335.

Belongs to the ATP:guanido phosphotransferase family. Dimer of identical or non-identical chains. With MM being the major form in skeletal muscle and myocardium, MB existing in myocardium, and BB existing in many tissues, especially brain.

It is found in the cytoplasm. It carries out the reaction creatine + ATP = N-phosphocreatine + ADP + H(+). Functionally, reversibly catalyzes the transfer of phosphate between ATP and various phosphogens (e.g. creatine phosphate). Creatine kinase isoenzymes play a central role in energy transduction in tissues with large, fluctuating energy demands, such as skeletal muscle, heart, brain and spermatozoa. The protein is Creatine kinase M-type of Tetronarce californica (Pacific electric ray).